Consider the following 158-residue polypeptide: Transcriptional repressor NrdR (158 aa).

Positions 1-20 (MRCPYCQSEDTQVKDSRPAE) are disordered. A zinc finger lies at 3–34 (CPYCQSEDTQVKDSRPAEDGAVIRRRRVCSVC). The span at 11–20 (TQVKDSRPAE) shows a compositional bias: basic and acidic residues. The 91-residue stretch at 49–139 (LMVVKKSGRR…VYRNFSKAVD (91 aa)) folds into the ATP-cone domain.

It belongs to the NrdR family. The cofactor is Zn(2+).

In terms of biological role, negatively regulates transcription of bacterial ribonucleotide reductase nrd genes and operons by binding to NrdR-boxes. This chain is Transcriptional repressor NrdR, found in Brucella anthropi (strain ATCC 49188 / DSM 6882 / CCUG 24695 / JCM 21032 / LMG 3331 / NBRC 15819 / NCTC 12168 / Alc 37) (Ochrobactrum anthropi).